The following is a 71-amino-acid chain: Protein SlyX homolog (71 aa).

The interval 52–71 (RLDQAESSAGAPANERPPHY) is disordered.

The protein belongs to the SlyX family.

The chain is Protein SlyX homolog from Rhodopseudomonas palustris (strain ATCC BAA-98 / CGA009).